We begin with the raw amino-acid sequence, 596 residues long: Glomulin (596 aa).

A2 is modified (N-acetylalanine). An alpha-helical region with structural similarity to HEAT repeats region spans residues 2-555 (AVEELQSIIK…EEIPSMPPEM (554 aa)). Residues 299 to 596 (IDQLPMVLSP…STSEENVGIK (298 aa)) form an important for interaction with RBX1 region.

In terms of assembly, interacts with FKBP4 and FKBP1A. Interacts with RBX1 (via RING domain). Identified in complexes that contain RBX1 plus one of the cullins CUL1, CUL2, CUL3, and CUL4A. Identified in a SCF complex composed of CUL1, RBX1, SKP1, FBXW7 and GLMN. Component of a SCF-like complex consisting of CUL7, RBX1, SKP1, FBXW8 and GLMN. Interacts with unphosphorylated MET and is released upon MET phosphorylation. Phosphorylated on tyrosine residues. As to expression, ubiquitous. Detected in embryonic vasculature and embryonic perichondrium, and in adult eye, brain, heart, testis, kidney, smooth muscle and skeletal muscle.

Functionally, regulatory component of cullin-RING-based SCF (SKP1-Cullin-F-box protein) E3 ubiquitin-protein ligase complexes. Inhibits E3 ubiquitin ligase activity by binding to the RING domain of RBX1 and inhibiting its interaction with the E2 ubiquitin-conjugating enzyme CDC34. Inhibits RBX1-mediated neddylation of CUL1. Required for normal stability and normal cellular levels of key components of SCF ubiquitin ligase complexes, including FBXW7, RBX1, CUL1, CUL2, CUL3, CUL4A, and thereby contributes to the regulation of CCNE1 and MYC levels. Essential for normal development of the vasculature. Contributes to the regulation of RPS6KB1 phosphorylation. This chain is Glomulin (Glmn), found in Mus musculus (Mouse).